A 381-amino-acid chain; its full sequence is MSFRDVLERGDEFLEAYPRRSPLWRFLSYSTSLLTFGVSKLLLFTCYNVKLNGFEKLETALERSKRENRGLMTVMNHMSMVDDPLVWATLPYKLFTSLDNIRWSLGAHNICFQNKFLANFFSLGQVLSTERFGVGPFQGSIDASIRLLSPDDTLDLEWTPHSEVSSSLKKAYSPPIIRSKPSWVHVYPEGFVLQLYPPFENSMRYFKWGITRMILEATKPPIVVPIFATGFEKIASEAVTDSMFRQILPRNFGSEINVTIGDPLNDDLIDRYRKEWTHLVEKYYDPKNPNDLSDELKYGKEAQDLRSRLAAELRAHVAEIRNEVRKLPREDPRFKSPSWWKRFNTTEGKSDPDVKVIGENWAIRRMQKFLPPEGKPKGKDD.

The Mitochondrial intermembrane segment spans residues Met-1–Arg-25. An intramembrane segment occupies Phe-26–Tyr-47. Residues Asn-48 to Asp-381 lie on the Mitochondrial intermembrane side of the membrane. The HXXXXD motif motif lies at His-77 to Asp-82. The interval Leu-215–Glu-232 is required for membrane insertion.

The protein belongs to the taffazin family.

The protein localises to the mitochondrion outer membrane. Its subcellular location is the mitochondrion inner membrane. It catalyses the reaction 1'-[1,2-diacyl-sn-glycero-3-phospho],3'-[1-acyl-sn-glycero-3-phospho]-glycerol + a 1,2-diacyl-sn-glycero-3-phosphocholine = a cardiolipin + a 1-acyl-sn-glycero-3-phosphocholine. The enzyme catalyses 1,2-di-(9Z,12Z-octadecadienoyl)-sn-glycero-3-phosphocholine + 1'-[1,2-di-(9Z,12Z-octadecadienoyl)-sn-glycero-3-phospho]-3'-[1-(9Z,12Z-octadecadienoyl)-sn-glycero-3-phospho]-glycerol = 1-(9Z,12Z)-octadecadienoyl-sn-glycero-3-phosphocholine + 1',3'-bis-[1,2-di-(9Z,12Z-octadecadienoyl)-sn-glycero-3-phospho]-glycerol. The catalysed reaction is 1'-[1,2-di-(9Z-octadecenoyl)-sn-glycero-3-phospho]-3'-[1-(9Z-octadecenoyl)-2-hexadecanoyl-sn-glycero-3-phospho]-glycerol + 1-hexadecanoyl-sn-glycero-3-phosphocholine = 1'-[1,2-di-(9Z-octadecenoyl)-sn-glycero-3-phospho]-3'-[1-(9Z-octadecenoyl)-sn-glycero-3-phospho]-glycerol + 1,2-dihexadecanoyl-sn-glycero-3-phosphocholine. It carries out the reaction 1'-[1,2-di-(9Z-octadecenoyl)-sn-glycero-3-phospho]-3'-[1-(9Z-octadecenoyl)-2-(9Z-hexadecenoyl)-sn-glycero-3-phospho]-glycerol + 1-(9Z-hexadecenoyl)-sn-glycero-3-phosphocholine = 1,2-di-(9Z-hexadecenoyl)-sn-glycero-3-phosphocholine + 1'-[1,2-di-(9Z-octadecenoyl)-sn-glycero-3-phospho]-3'-[1-(9Z-octadecenoyl)-sn-glycero-3-phospho]-glycerol. It catalyses the reaction 1',3'-bis[1,2-di-(9Z-octadecenoyl)-sn-glycero-3-phospho]-glycerol + 1-(9Z-octadecenoyl)-sn-glycero-3-phosphocholine = 1'-[1,2-di-(9Z-octadecenoyl)-sn-glycero-3-phospho]-3'-[1-(9Z-octadecenoyl)-sn-glycero-3-phospho]-glycerol + 1,2-di-(9Z-octadecenoyl)-sn-glycero-3-phosphocholine. The enzyme catalyses 1'-[1,2-di-(9Z-octadecenoyl)-sn-glycero-3-phospho]-3'-[1-(9Z-octadecenoyl)-2-(9Z,12Z-octadecadienoyl)-sn-glycero-3-phospho]-glycerol + 1-(9Z,12Z)-octadecadienoyl-sn-glycero-3-phosphocholine = 1,2-di-(9Z,12Z-octadecadienoyl)-sn-glycero-3-phosphocholine + 1'-[1,2-di-(9Z-octadecenoyl)-sn-glycero-3-phospho]-3'-[1-(9Z-octadecenoyl)-sn-glycero-3-phospho]-glycerol. The catalysed reaction is 1'-[1,2-di-(9Z-octadecenoyl)-sn-glycero-3-phospho]-3'-[1-(9Z-octadecenoyl)-2-(9Z-hexadecenoyl)-sn-glycero-3-phospho]-glycerol + 1-hexadecanoyl-sn-glycero-3-phosphocholine = 1-hexadecanoyl-2-(9Z-hexadecenoyl)-sn-glycero-3-phosphocholine + 1'-[1,2-di-(9Z-octadecenoyl)-sn-glycero-3-phospho]-3'-[1-(9Z-octadecenoyl)-sn-glycero-3-phospho]-glycerol. It carries out the reaction 1'-[1,2-di-(9Z-octadecenoyl)-sn-glycero-3-phospho]-3'-[1-(9Z-octadecenoyl)-2-hexadecanoyl-sn-glycero-3-phospho]-glycerol + 1-(9Z-hexadecenoyl)-sn-glycero-3-phosphocholine = 1-(9Z-hexadecenoyl)-2-hexadecanoyl-sn-glycero-3-phosphocholine + 1'-[1,2-di-(9Z-octadecenoyl)-sn-glycero-3-phospho]-3'-[1-(9Z-octadecenoyl)-sn-glycero-3-phospho]-glycerol. It catalyses the reaction 2 1'-[1,2-diacyl-sn-glycero-3-phospho],3'-[1-acyl-sn-glycero-3-phospho]-glycerol = 1',3'-bis-[1-acyl-sn-glycero-3-phospho]-glycerol + a cardiolipin. The enzyme catalyses 2 1'-[1,2-di-(9Z-octadecenoyl)-sn-glycero-3-phospho]-3'-[1-(9Z-octadecenoyl)-sn-glycero-3-phospho]-glycerol = 1',3'-bis-[1-(9Z-octadecenoyl)-sn-glycero-3-phospho]-glycerol + 1',3'-bis[1,2-di-(9Z-octadecenoyl)-sn-glycero-3-phospho]-glycerol. The catalysed reaction is 1,2-di-(9Z-hexadecenoyl)-sn-glycero-3-phosphocholine + 1-hexadecanoyl-sn-glycero-3-phosphocholine = 1-hexadecanoyl-2-(9Z-hexadecenoyl)-sn-glycero-3-phosphocholine + 1-(9Z-hexadecenoyl)-sn-glycero-3-phosphocholine. It carries out the reaction 1'-[1,2-di-(9Z,12Z-octadecadienoyl)-sn-glycero-3-phospho]-3'-[1-(9Z,12Z-octadecadienoyl)-sn-glycero-3-phospho]-glycerol + 1,2-di-(9Z-octadecenoyl)-sn-glycero-3-phosphocholine = 1'-[1,2-di-(9Z,12Z-octadecadienoyl)-sn-glycero-3-phospho]-3'-[1-(9Z,12Z-octadecadienoyl)-2-(9Z-octadecenoyl)-sn-glycero-3-phospho]-glycerol + 1-(9Z-octadecenoyl)-sn-glycero-3-phosphocholine. Its pathway is phospholipid metabolism. Functionally, acyltransferase required to remodel newly synthesized phospholipid cardiolipin (1',3'-bis-[1,2-diacyl-sn-glycero-3-phospho]-glycerol or CL), a key component of the mitochondrial inner membrane, with tissue specific acyl chains necessary for adequate mitochondrial function. Its role in cellular physiology is to improve mitochondrial performance. CL is critical for the coassembly of lipids and proteins in mitochondrial membranes, for instance, remodeling of the acyl groups of CL in the mitochondrial inner membrane affects the assembly and stability of respiratory chain complex IV and its supercomplex forms. Catalyzes the transacylation between phospholipids and lysophospholipids, with the highest rate being between phosphatidylcholine (1,2-diacyl-sn-glycero-3-phosphocholine or PC) and CL. Catalyzes both 1-acyl-sn-glycero-3-phosphocholine (lysophosphatidylcholine or LPC) reacylation and PC-CL transacylation, that means, it exchanges acyl groups between CL and PC by a combination of forward and reverse transacylations. Also catalyzes transacylations between other phospholipids such as phosphatidylethanolamine (1,2-diacyl-sn-glycero-3-phosphoethanolamine or PE) and CL, between PC and PE, and between PC and phosphatidate (1,2-diacyl-sn-glycero-3-phosphate or PA), although at lower rate. Not regiospecific, it transfers acyl groups into any of the sn-1 and sn-2 positions of the monolysocardiolipin (MLCL), which is an important prerequisite for uniformity and symmetry in CL acyl distribution. Cannot transacylate dilysocardiolipin (DLCL), thus, the role of MLCL is limited to that of an acyl acceptor. CoA-independent, it can reshuffle molecular species within a single phospholipid class. Redistributes fatty acids between MLCL, CL, and other lipids, which prolongs the half-life of CL. Its action is completely reversible, which allows for cyclic changes, such as fission and fusion or bending and flattening of the membrane. Hence, by contributing to the flexibility of the lipid composition, it plays an important role in the dynamics of mitochondria membranes. Essential for the final stage of spermatogenesis, spermatid individualization. Required for the initiation of mitophagy. The chain is Tafazzin (TAZ1) from Saccharomyces cerevisiae (strain ATCC 204508 / S288c) (Baker's yeast).